A 398-amino-acid chain; its full sequence is Thyrotropin-releasing hormone receptor (398 aa).

Residues methionine 1–threonine 28 lie on the Extracellular side of the membrane. N-linked (GlcNAc...) asparagine glycosylation is found at asparagine 3 and asparagine 10. A helical membrane pass occupies residues isoleucine 29–methionine 51. Over arginine 52–asparagine 61 the chain is Cytoplasmic. Residues cysteine 62–isoleucine 83 traverse the membrane as a helical segment. Over threonine 84–leucine 99 the chain is Extracellular. Cysteine 98 and cysteine 179 are disulfide-bonded. Residues cysteine 100–isoleucine 121 traverse the membrane as a helical segment. Topologically, residues glutamate 122 to lysine 144 are cytoplasmic. The chain crosses the membrane as a helical span at residues isoleucine 145–isoleucine 168. At serine 169–leucine 193 the chain is on the extracellular side. The chain crosses the membrane as a helical span at residues methionine 194–alanine 215. Over arginine 216–lysine 266 the chain is Cytoplasmic. The chain crosses the membrane as a helical span at residues methionine 267–valine 288. At asparagine 289–phenylalanine 296 the chain is on the extracellular side. The chain crosses the membrane as a helical span at residues glutamine 297–isoleucine 319. Topologically, residues tyrosine 320–serine 398 are cytoplasmic.

This sequence belongs to the G-protein coupled receptor 1 family.

The protein resides in the cell membrane. Its function is as follows. Receptor for thyrotropin-releasing hormone (TRH). Upon ligand binding, this G-protein-coupled receptor triggers activation of the phosphatidylinositol (IP3)-calcium-protein kinase C (PKC) pathway. In Homo sapiens (Human), this protein is Thyrotropin-releasing hormone receptor (TRHR).